The following is a 705-amino-acid chain: Tetratricopeptide repeat protein 12 (705 aa).

Thr-71 bears the Phosphothreonine mark. TPR repeat units lie at residues 106–139, 140–173, and 174–207; these read ADALKEKGNEAFAEGNYETAILRYSEGLEKLKDM, KVLYTNRAQAYMKLEDYEKALVDCEWALKCDEKC, and TKAYFHMGKANLALKNYSVSRECYKKILEINPKL.

As to expression, expressed in testis and in epithelial cells of trachea and bronchial tube.

The protein localises to the cytoplasm. Its function is as follows. Cytoplasmic protein that plays a role in the proper assembly of dynein arm complexes in motile cilia in both respiratory cells and sperm flagella. This chain is Tetratricopeptide repeat protein 12 (TTC12), found in Homo sapiens (Human).